A 315-amino-acid chain; its full sequence is NAD kinase (315 aa).

Asp-91 serves as the catalytic Proton acceptor. Residues 91–92 (DG), Arg-96, 165–166 (NE), Asp-195, and 206–211 (TAYAFS) contribute to the NAD(+) site.

The protein belongs to the NAD kinase family. It depends on a divalent metal cation as a cofactor.

The protein localises to the cytoplasm. The catalysed reaction is NAD(+) + ATP = ADP + NADP(+) + H(+). In terms of biological role, involved in the regulation of the intracellular balance of NAD and NADP, and is a key enzyme in the biosynthesis of NADP. Catalyzes specifically the phosphorylation on 2'-hydroxyl of the adenosine moiety of NAD to yield NADP. This is NAD kinase from Rhodococcus erythropolis (strain PR4 / NBRC 100887).